The primary structure comprises 582 residues: Vacuolar basic amino acid transporter 5 (582 aa).

Residues 1–44 (MEETKYSSQQEIEGACGSDASLNARGSNDSPMGLSLYLCLASLT) lie on the Cytoplasmic side of the membrane. Residues 45 to 65 (LVLFITALDILIVGTIIDVVA) traverse the membrane as a helical segment. The Vacuolar portion of the chain corresponds to 66–80 (EQFGNYSKTGWLVTG). A glycan (N-linked (GlcNAc...) asparagine) is linked at Asn70. A helical membrane pass occupies residues 81–101 (YSLPNAILSLIWGRFASIIGF). Topologically, residues 102–104 (QHS) are cytoplasmic. The chain crosses the membrane as a helical span at residues 105–125 (LILAILIFEAGSLIAALASSM). At 126-132 (NMLIFGR) the chain is on the vacuolar side. Residues 133–153 (VVAGVGGSGLQTLCFVIGCTM) form a helical membrane-spanning segment. Residues 154–160 (VGERSRP) lie on the Cytoplasmic side of the membrane. A helical membrane pass occupies residues 161–181 (LVISILSCAFAVAAIVGPIIG). Residues 182–191 (GAFTTHVTWR) lie on the Vacuolar side of the membrane. The chain crosses the membrane as a helical span at residues 192–212 (WCFYINLPIGGLAIIMFLLTY). Residues 213-256 (KAENKGILQQIKDAIGTISSFTFSKFRHQVNFKRLMNGIIFKFD) lie on the Cytoplasmic side of the membrane. Residues 257–277 (FFGFALCSAGLVLFLLGLTFG) traverse the membrane as a helical segment. The Vacuolar segment spans residues 278-287 (GNKYSWNSGQ). Residues 288–308 (VITYLVLGVLLFIFSLVYDFF) traverse the membrane as a helical segment. At 309–329 (LFDKFNPEPDNISYRPLLLRR) the chain is on the cytoplasmic side. The chain crosses the membrane as a helical span at residues 330–350 (LVAKPAIIIVNMVTFLLCTGY). The Vacuolar portion of the chain corresponds to 351 to 372 (NGQMIYSVQFFQLIFASSAWKA). The helical transmembrane segment at 373-393 (GLHLIPIVITNVIAAIASGVI) threads the bilayer. The Cytoplasmic segment spans residues 394 to 401 (TKKLGLVK). Residues 402–422 (PLLIFGGVLGVIGAGLMTLMT) traverse the membrane as a helical segment. The N-linked (GlcNAc...) asparagine glycan is linked to Asn423. The Vacuolar portion of the chain corresponds to 423-430 (NTSTKSTQ). A helical transmembrane segment spans residues 431 to 451 (IGVLLLPGFSLGFALQASLMS). Residues 452–469 (AQLQITKDRPEAAMDFIE) are Cytoplasmic-facing. A helical transmembrane segment spans residues 470 to 492 (VTAFNTFMKSLGTTLGGVLSTTV). Residues 493 to 539 (FSASFHNKVSRAHLEPYEGKTVDDMILYRLQNYDGSHSTIGNILSDS) are Vacuolar-facing. A helical transmembrane segment spans residues 540–560 (IKNVFWMDLGFYALGFLFCSF). Residues 561-582 (SSNKKLIIPKKDDTPEDNLEDK) lie on the Cytoplasmic side of the membrane.

It belongs to the major facilitator superfamily.

It localises to the vacuole membrane. Its function is as follows. Transporter required for vacuolar uptake of basic amino acids. In Saccharomyces cerevisiae (strain ATCC 204508 / S288c) (Baker's yeast), this protein is Vacuolar basic amino acid transporter 5 (VBA5).